Consider the following 439-residue polypeptide: Ribosomal protein uS12 methylthiotransferase RimO (439 aa).

Residues 3–118 enclose the MTTase N-terminal domain; it reads KKFYITTLGC…AGKILREKFP (116 aa). [4Fe-4S] cluster is bound by residues cysteine 12, cysteine 48, cysteine 81, cysteine 157, cysteine 161, and cysteine 164. The Radical SAM core domain occupies 143–370; that stretch reads NYSKPYAYVK…RDVHLAILEE (228 aa). The 66-residue stretch at 373 to 438 folds into the TRAM domain; the sequence is ESRIGQTYDA…EYDMNGTWIS (66 aa).

The protein belongs to the methylthiotransferase family. RimO subfamily. Requires [4Fe-4S] cluster as cofactor.

The protein localises to the cytoplasm. The catalysed reaction is L-aspartate(89)-[ribosomal protein uS12]-hydrogen + (sulfur carrier)-SH + AH2 + 2 S-adenosyl-L-methionine = 3-methylsulfanyl-L-aspartate(89)-[ribosomal protein uS12]-hydrogen + (sulfur carrier)-H + 5'-deoxyadenosine + L-methionine + A + S-adenosyl-L-homocysteine + 2 H(+). Catalyzes the methylthiolation of an aspartic acid residue of ribosomal protein uS12. The protein is Ribosomal protein uS12 methylthiotransferase RimO of Leptospira borgpetersenii serovar Hardjo-bovis (strain JB197).